The following is a 587-amino-acid chain: Polyphenol oxidase E, chloroplastic (587 aa).

Residues 1–87 (MSSSSSITTT…AANLAPLATA (87 aa)) constitute a chloroplast transit peptide. Intrachain disulfides connect Cys98/Cys114 and Cys113/Cys180. 6 residues coordinate Cu cation: His179, His197, His206, His328, His332, and His363. Residues 183–197 (CNGAYKVGGKELQVH) constitute a cross-link (2'-(S-cysteinyl)-histidine (Cys-His)).

Belongs to the tyrosinase family. Requires Cu(2+) as cofactor.

Its subcellular location is the plastid. The protein resides in the chloroplast thylakoid lumen. The enzyme catalyses 2 catechol + O2 = 2 1,2-benzoquinone + 2 H2O. Its function is as follows. Catalyzes the oxidation of mono- and o-diphenols to o-diquinones. In Solanum lycopersicum (Tomato), this protein is Polyphenol oxidase E, chloroplastic.